We begin with the raw amino-acid sequence, 77 residues long: Large ribosomal subunit protein bL28 (77 aa).

This sequence belongs to the bacterial ribosomal protein bL28 family.

This Acidovorax ebreus (strain TPSY) (Diaphorobacter sp. (strain TPSY)) protein is Large ribosomal subunit protein bL28.